A 336-amino-acid polypeptide reads, in one-letter code: Glyceraldehyde-3-phosphate dehydrogenase (336 aa).

Residues 12–13, aspartate 35, arginine 79, and serine 121 contribute to the NAD(+) site; that span reads RI. Residues 152–154 and threonine 183 contribute to the D-glyceraldehyde 3-phosphate site; that span reads SCT. Cysteine 153 serves as the catalytic Nucleophile. Asparagine 184 provides a ligand contact to NAD(+). D-glyceraldehyde 3-phosphate-binding positions include arginine 198, 211–212, and arginine 234; that span reads TG. Asparagine 317 provides a ligand contact to NAD(+).

It belongs to the glyceraldehyde-3-phosphate dehydrogenase family. As to quaternary structure, homotetramer.

Its subcellular location is the cytoplasm. It carries out the reaction D-glyceraldehyde 3-phosphate + phosphate + NAD(+) = (2R)-3-phospho-glyceroyl phosphate + NADH + H(+). Its pathway is carbohydrate degradation; glycolysis; pyruvate from D-glyceraldehyde 3-phosphate: step 1/5. Its activity is regulated as follows. Resistant to pentalenolactone. In terms of biological role, catalyzes the oxidative phosphorylation of glyceraldehyde 3-phosphate (G3P) to 1,3-bisphosphoglycerate (BPG) using the cofactor NAD. The first reaction step involves the formation of a hemiacetal intermediate between G3P and a cysteine residue, and this hemiacetal intermediate is then oxidized to a thioester, with concomitant reduction of NAD to NADH. The reduced NADH is then exchanged with the second NAD, and the thioester is attacked by a nucleophilic inorganic phosphate to produce BPG. The sequence is that of Glyceraldehyde-3-phosphate dehydrogenase (gap) from Streptomyces coelicolor (strain ATCC BAA-471 / A3(2) / M145).